The sequence spans 379 residues: Carbamoyl phosphate synthase small chain (379 aa).

The tract at residues 1 to 183 (MTSQDRSEAV…EAYVVEPDGE (183 aa)) is CPSase. Ser-51, Gly-235, and Gly-237 together coordinate L-glutamine. In terms of domain architecture, Glutamine amidotransferase type-1 spans 185–379 (LYTVVAYDMG…FVELIQANKK (195 aa)). The Nucleophile role is filled by Cys-263. The L-glutamine site is built by Phe-264, Gln-267, Asn-305, Gly-307, and Phe-308. Catalysis depends on residues His-353 and Glu-355.

It belongs to the CarA family. As to quaternary structure, composed of two chains; the small (or glutamine) chain promotes the hydrolysis of glutamine to ammonia, which is used by the large (or ammonia) chain to synthesize carbamoyl phosphate. Tetramer of heterodimers (alpha,beta)4.

It catalyses the reaction hydrogencarbonate + L-glutamine + 2 ATP + H2O = carbamoyl phosphate + L-glutamate + 2 ADP + phosphate + 2 H(+). The enzyme catalyses L-glutamine + H2O = L-glutamate + NH4(+). It participates in amino-acid biosynthesis; L-arginine biosynthesis; carbamoyl phosphate from bicarbonate: step 1/1. Its pathway is pyrimidine metabolism; UMP biosynthesis via de novo pathway; (S)-dihydroorotate from bicarbonate: step 1/3. In terms of biological role, small subunit of the glutamine-dependent carbamoyl phosphate synthetase (CPSase). CPSase catalyzes the formation of carbamoyl phosphate from the ammonia moiety of glutamine, carbonate, and phosphate donated by ATP, constituting the first step of 2 biosynthetic pathways, one leading to arginine and/or urea and the other to pyrimidine nucleotides. The small subunit (glutamine amidotransferase) binds and cleaves glutamine to supply the large subunit with the substrate ammonia. The chain is Carbamoyl phosphate synthase small chain from Corynebacterium diphtheriae (strain ATCC 700971 / NCTC 13129 / Biotype gravis).